We begin with the raw amino-acid sequence, 189 residues long: Transcription factor FapR (189 aa).

Belongs to the FapR family.

In terms of biological role, transcriptional factor involved in regulation of membrane lipid biosynthesis by repressing genes involved in fatty acid and phospholipid metabolism. The sequence is that of Transcription factor FapR from Exiguobacterium sibiricum (strain DSM 17290 / CCUG 55495 / CIP 109462 / JCM 13490 / 255-15).